The chain runs to 693 residues: Phosphoribosylformylglycinamidine synthase subunit PurL (693 aa).

His-34 is a catalytic residue. ATP contacts are provided by Tyr-37 and Lys-76. Glu-78 provides a ligand contact to Mg(2+). Residues 79–82 (SHNH) and Arg-101 each bind substrate. The active-site Proton acceptor is His-80. Asp-102 is a Mg(2+) binding site. A substrate-binding site is contributed by Gln-222. Asp-248 serves as a coordination point for Mg(2+). Residue 292–294 (ETQ) coordinates substrate. Asp-470 and Gly-507 together coordinate ATP. Ser-510 contributes to the substrate binding site.

This sequence belongs to the FGAMS family. In terms of assembly, monomer. Part of the FGAM synthase complex composed of 1 PurL, 1 PurQ and 2 PurS subunits.

It localises to the cytoplasm. It carries out the reaction N(2)-formyl-N(1)-(5-phospho-beta-D-ribosyl)glycinamide + L-glutamine + ATP + H2O = 2-formamido-N(1)-(5-O-phospho-beta-D-ribosyl)acetamidine + L-glutamate + ADP + phosphate + H(+). It participates in purine metabolism; IMP biosynthesis via de novo pathway; 5-amino-1-(5-phospho-D-ribosyl)imidazole from N(2)-formyl-N(1)-(5-phospho-D-ribosyl)glycinamide: step 1/2. Its function is as follows. Part of the phosphoribosylformylglycinamidine synthase complex involved in the purines biosynthetic pathway. Catalyzes the ATP-dependent conversion of formylglycinamide ribonucleotide (FGAR) and glutamine to yield formylglycinamidine ribonucleotide (FGAM) and glutamate. The FGAM synthase complex is composed of three subunits. PurQ produces an ammonia molecule by converting glutamine to glutamate. PurL transfers the ammonia molecule to FGAR to form FGAM in an ATP-dependent manner. PurS interacts with PurQ and PurL and is thought to assist in the transfer of the ammonia molecule from PurQ to PurL. The protein is Phosphoribosylformylglycinamidine synthase subunit PurL of Pyrobaculum islandicum (strain DSM 4184 / JCM 9189 / GEO3).